The primary structure comprises 744 residues: MASEGASIPSPVVRQIDKQFLICSICLERYKNPKVLPCLHTFCERCLQNYIPAHSLTLSCPVCRQTSILPEKGVAALQNNFFITNLMDVLQRTPGSNGEDSSILETVTAVAAGKPLSCPNHDGNVMEFYCQSCETAMCRECTEGEHAEHPTVPLKDVVEQHKASLQVQLDAVNKRLPEIDSALQFISEIIHQLTNQKASIVDDIHSTFDELQKTLNVRKSVLLMELEVNYGLKHKVLQSQLDTLLQGQESIKSCSNFTAQALNHGTETEVLLVKKQMSEKLNELADQDFPLHPRENDQLDFIVETEGLKKSIHNLGTILTTNAVASETVATGEGLRQTIIGQPMSVTITTKDKDGELCKTGNAYLTAELSTPDGSVADGEILDNKNGTYEFLYTVQKEGDFTLSLRLYDQHIRGSPFKLKVIRSADVSPTTEGVKRRVKSPGSGHVKQKAVKRPASMYSTGKRKENPIEDDLIFRVGTKGRNKGEFTNLQGVAASTSGKILIADSNNQCVQIFSNDGQFKSRFGIRGRSPGQLQRPTGVAVHPSGDIIIADYDNKWVSIFSNDGKFKTKIGSGKLMGPKGVSVDRNGHIIVVDNKACCVFIFQPNGKIVTRFGSRGNGDRQFAGPHFAAVNSNNEIIITDFHNHSVKVFNQEGEFMLKFGSNGEGNGQFNAPTGVAVDSNGNIIVADWGNSRIQVFDGSGSFLSYINTSADPLYGPQGLALTSDGHVVVADSGNHCFKVYRYLQ.

Ser-10 is subject to Phosphoserine. The RING-type zinc-finger motif lies at 23–64; sequence CSICLERYKNPKVLPCLHTFCERCLQNYIPAHSLTLSCPVCR. The segment at 113 to 154 adopts a B box-type zinc-finger fold; the sequence is GKPLSCPNHDGNVMEFYCQSCETAMCRECTEGEHAEHPTVPL. Residues Cys-118, His-121, Cys-141, and His-146 each contribute to the Zn(2+) site. A Filamin repeat occupies 320 to 421; it reads TTNAVASETV…IRGSPFKLKV (102 aa). Residue Thr-371 is modified to Phosphothreonine. Ser-375, Ser-424, and Ser-428 each carry phosphoserine. The disordered stretch occupies residues 432-462; that stretch reads EGVKRRVKSPGSGHVKQKAVKRPASMYSTGK. NHL repeat units follow at residues 473–516, 520–563, 564–605, 609–652, 656–699, and 700–743; these read IFRV…FSND, KSRF…FSND, GKFK…FQPN, VTRF…FNQE, MLKF…FDGS, and GSFL…YRYL.

This sequence belongs to the TRIM/RBCC family. As to quaternary structure, forms homooligomers. Interacts with TRIM3; this interaction reduces TRIM2 activity. Interacts with myosin V; myosin V may not be a substrate for ubiquitination. Interacts with NEFL. Interacts with phosphorylated BCL2L11. Interacts with SIRPA. RING-type zinc finger-dependent and UBE2D1-dependent autoubiquitination. In terms of tissue distribution, highly expressed in the cerebellum, hippocampus, retina and spinal cord. In the cerebellum, strongest expression in Purkinje cells and in the deep cerebellar nuclei. In retina, high expression in the ganglionic cell layer, inner nuclear layer and inthe outer plexiform layer. Particularly high expression in the hippocampus, in pyramidal cells of CA1-CA3 hippocampal areas and ingranule cells of the dentate gyrus.

The protein localises to the cytoplasm. The enzyme catalyses S-ubiquitinyl-[E2 ubiquitin-conjugating enzyme]-L-cysteine + [acceptor protein]-L-lysine = [E2 ubiquitin-conjugating enzyme]-L-cysteine + N(6)-ubiquitinyl-[acceptor protein]-L-lysine.. Its pathway is protein modification; protein ubiquitination. UBE2D1-dependent E3 ubiquitin-protein ligase that mediates the ubiquitination of NEFL and of phosphorylated BCL2L11. Plays a neuroprotective function. May play a role in neuronal rapid ischemic tolerance. Plays a role in antiviral immunity and limits new world arenavirus infection independently of its ubiquitin ligase activity by decreasing virus internalization. The polypeptide is Tripartite motif-containing protein 2 (Trim2) (Mus musculus (Mouse)).